A 625-amino-acid chain; its full sequence is Autophagy-related protein 13b (625 aa).

Composition is skewed to low complexity over residues 322 to 332 and 455 to 477; these read PSVSCSPSPTR and PSGV…SSRS. Disordered stretches follow at residues 322 to 388, 452 to 527, and 544 to 564; these read PSVS…AVPR, FRRP…YPKK, and PPLR…NNNK. Over residues 498–518 the composition is skewed to basic and acidic residues; sequence ITDRNSRPGSFDHRGDIHEPF.

Belongs to the ATG13 family. Plant subfamily.

Its subcellular location is the cytoplasmic vesicle. It localises to the autophagosome. Involved in autophagy in a nutritional condition dependent manner. The ATG1-ATG13 protein kinase complex regulates downstream events required for autophagosome enclosure and/or vacuolar delivery. Becomes a target of autophagy under nutrient starvation. Connects autophagy to plant nutritional status. The chain is Autophagy-related protein 13b from Arabidopsis thaliana (Mouse-ear cress).